Consider the following 240-residue polypeptide: DNA repair protein RecO (240 aa).

The protein belongs to the RecO family.

Its function is as follows. Involved in DNA repair and RecF pathway recombination. In Pseudoalteromonas atlantica (strain T6c / ATCC BAA-1087), this protein is DNA repair protein RecO.